The primary structure comprises 547 residues: Threonine synthase (547 aa).

K117 carries the post-translational modification N6-(pyridoxal phosphate)lysine. The pyridoxal 5'-phosphate site is built by G272, N273, F274, D276, and T471.

The protein belongs to the threonine synthase family. Pyridoxal 5'-phosphate serves as cofactor.

It carries out the reaction O-phospho-L-homoserine + H2O = L-threonine + phosphate. Its pathway is amino-acid biosynthesis; L-threonine biosynthesis; L-threonine from L-aspartate: step 5/5. Its function is as follows. Catalyzes the gamma-elimination of phosphate from L-phosphohomoserine and the beta-addition of water to produce L-threonine. This chain is Threonine synthase, found in Cryptococcus neoformans var. grubii serotype A (strain H99 / ATCC 208821 / CBS 10515 / FGSC 9487) (Filobasidiella neoformans var. grubii).